Consider the following 140-residue polypeptide: Ribosome maturation factor RimP (140 aa).

It belongs to the RimP family.

It is found in the cytoplasm. Required for maturation of 30S ribosomal subunits. The protein is Ribosome maturation factor RimP of Campylobacter jejuni subsp. jejuni serotype O:23/36 (strain 81-176).